The chain runs to 174 residues: Calcium-binding protein F (174 aa).

EF-hand domains lie at 9 to 44, 60 to 83, 92 to 127, and 133 to 162; these read KIFQEVQKFVKNYDLNKDGSVTSFDIYRSFLKKMDG, VDMDHDGKFTYQEIAKYCADEAKK, AALADVEAMLLRFDKDKDKKLTKTEFVEYFKGNGHT, and DQVLKIIDLDKDGCVSANELQEWFKKRRID. Ca(2+)-binding residues include D22, N24, D26, S28, and D33. Ca(2+) is bound by residues D105, D107, D109, K111, E116, D140, D142, D144, C146, and E151.

The chain is Calcium-binding protein F (cbpF) from Dictyostelium discoideum (Social amoeba).